A 147-amino-acid chain; its full sequence is MADSGPAGGAALAAPAPGPGSGGAGPRVYFQSPPGAAGEGPGGADDEGPVRRQGKVTVKYDRKELRKRLNLEEWILEQLTRLYDCQEEEIPELEIDVDELLDMESDDTRAARVKELLVDCYKPTEAFISGLLDKIRGMQKLSTPQKK.

Over residues 1–15 (MADSGPAGGAALAAP) the composition is skewed to low complexity. The tract at residues 1 to 55 (MADSGPAGGAALAAPAPGPGSGGAGPRVYFQSPPGAAGEGPGGADDEGPVRRQGK) is disordered. Alanine 2 carries the N-acetylalanine modification. The residue at position 21 (serine 21) is a Phosphoserine. A Phosphotyrosine modification is found at tyrosine 29. Position 32 is a phosphoserine (serine 32). Threonine 57 is modified (phosphothreonine). Residues 61–103 (DRKELRKRLNLEEWILEQLTRLYDCQEEEIPELEIDVDELLDM) adopt a coiled-coil conformation.

Belongs to the PP1 inhibitor family. Post-translationally, phosphorylated primarily on Thr-57 by PKC (in vitro). An unknown Ser is also phosphorylated by PKC (in vitro).

It is found in the cytoplasm. Inhibitor of PPP1CA. Has over 50-fold higher inhibitory activity when phosphorylated. This Sus scrofa (Pig) protein is Protein phosphatase 1 regulatory subunit 14B (PPP1R14B).